We begin with the raw amino-acid sequence, 193 residues long: Imidazoleglycerol-phosphate dehydratase (193 aa).

This sequence belongs to the imidazoleglycerol-phosphate dehydratase family.

It is found in the cytoplasm. It carries out the reaction D-erythro-1-(imidazol-4-yl)glycerol 3-phosphate = 3-(imidazol-4-yl)-2-oxopropyl phosphate + H2O. It participates in amino-acid biosynthesis; L-histidine biosynthesis; L-histidine from 5-phospho-alpha-D-ribose 1-diphosphate: step 6/9. This is Imidazoleglycerol-phosphate dehydratase from Metallosphaera sedula (strain ATCC 51363 / DSM 5348 / JCM 9185 / NBRC 15509 / TH2).